A 234-amino-acid chain; its full sequence is Probable septum site-determining protein MinC (234 aa).

This sequence belongs to the MinC family. In terms of assembly, interacts with MinD and FtsZ.

In terms of biological role, cell division inhibitor that blocks the formation of polar Z ring septums. Rapidly oscillates between the poles of the cell to destabilize FtsZ filaments that have formed before they mature into polar Z rings. Prevents FtsZ polymerization. This Buchnera aphidicola subsp. Baizongia pistaciae (strain Bp) protein is Probable septum site-determining protein MinC.